Reading from the N-terminus, the 247-residue chain is NCT transcriptional regulatory complex subunit A (247 aa).

Basic and acidic residues predominate over residues 1 to 12; that stretch reads MTDQDSTYRPRS. 3 disordered regions span residues 1–31, 48–82, and 212–247; these read MTDQ…SPIY, FFAP…SPDM, and VPDQ…DDSD. Polar residues predominate over residues 13–22; it reads PDLSTFQSSI.

It belongs to the NC2 alpha/DRAP1 family. Forms the NCT transcriptional regulatory complex with nctB and mot1.

It localises to the nucleus. Functionally, part of the NCT transcriptional regulatory complex that acts as a key regulator of ergosterol biosynthesis and the azole exporter cdr1B. The NCT complex binds the promoters of genes linked to azole susceptibility, and especially represses the expression of cdr1B transporter. The polypeptide is NCT transcriptional regulatory complex subunit A (Aspergillus fumigatus (strain CBS 144.89 / FGSC A1163 / CEA10) (Neosartorya fumigata)).